Reading from the N-terminus, the 349-residue chain is Isopentenyl-diphosphate delta-isomerase (349 aa).

Arg12 to Lys13 serves as a coordination point for substrate. FMN is bound by residues Ser69, Ser70 to Thr72, Ser101, and Asn129. Ser101–Arg103 is a substrate binding site. Gln164 serves as a coordination point for substrate. Glu165 is a binding site for Mg(2+). FMN contacts are provided by residues Lys196, Thr226, Gly279 to Arg281, and Ala300 to Ala301.

The protein belongs to the IPP isomerase type 2 family. In terms of assembly, homooctamer. Dimer of tetramers. The cofactor is FMN. It depends on NADPH as a cofactor. Mg(2+) is required as a cofactor.

The protein localises to the cytoplasm. The catalysed reaction is isopentenyl diphosphate = dimethylallyl diphosphate. Involved in the biosynthesis of isoprenoids. Catalyzes the 1,3-allylic rearrangement of the homoallylic substrate isopentenyl (IPP) to its allylic isomer, dimethylallyl diphosphate (DMAPP). This Paracoccus zeaxanthinifaciens protein is Isopentenyl-diphosphate delta-isomerase.